Consider the following 739-residue polypeptide: Polyphosphate kinase (739 aa).

Residues 22–45 (WHSDNSALAAPPAATTSASQDQLP) are disordered. The segment covering 27–40 (SALAAPPAATTSAS) has biased composition (low complexity). Asparagine 87 is a binding site for ATP. Positions 428 and 458 each coordinate Mg(2+). Histidine 488 serves as the catalytic Phosphohistidine intermediate. ATP contacts are provided by tyrosine 521, arginine 621, and histidine 649. Residues 714–739 (QWTASPQKGQQVRDHQESLMERHRSR) are disordered. Over residues 724 to 739 (QVRDHQESLMERHRSR) the composition is skewed to basic and acidic residues.

It belongs to the polyphosphate kinase 1 (PPK1) family. It depends on Mg(2+) as a cofactor. In terms of processing, an intermediate of this reaction is the autophosphorylated ppk in which a phosphate is covalently linked to a histidine residue through a N-P bond.

It carries out the reaction [phosphate](n) + ATP = [phosphate](n+1) + ADP. Its function is as follows. Catalyzes the reversible transfer of the terminal phosphate of ATP to form a long-chain polyphosphate (polyP). This chain is Polyphosphate kinase, found in Mycobacterium leprae (strain TN).